The chain runs to 173 residues: MASIPATVATVAQANMVAPFTGLKSNAAFPVTKKVNDFSTLASNGGRVQCMKVWPPLGKKRYETLSYLPNLTEVQLAKEVDYLLRNKWVPCLEFELEHGFVYRENARSPGYYDGRYWTMWKLPMFGCTDSAQVMKELQECKKEYPQAWIRIIGFDNVRQVQCISFIASKPDGF.

The N-terminal 49 residues, 1–49, are a transit peptide targeting the chloroplast; that stretch reads MASIPATVATVAQANMVAPFTGLKSNAAFPVTKKVNDFSTLASNGGRVQ.

Belongs to the RuBisCO small chain family. In terms of assembly, heterohexadecamer of 8 large and 8 small subunits.

Its subcellular location is the plastid. It localises to the chloroplast. Its function is as follows. RuBisCO catalyzes two reactions: the carboxylation of D-ribulose 1,5-bisphosphate, the primary event in carbon dioxide fixation, as well as the oxidative fragmentation of the pentose substrate. Both reactions occur simultaneously and in competition at the same active site. Although the small subunit is not catalytic it is essential for maximal activity. This chain is Ribulose bisphosphate carboxylase small subunit, chloroplastic 7, found in Flaveria pringlei.